Here is a 60-residue protein sequence, read N- to C-terminus: Short neurotoxin 1 (60 aa).

Intrachain disulfides connect cysteine 3/cysteine 22, cysteine 17/cysteine 39, cysteine 41/cysteine 52, and cysteine 53/cysteine 58.

This sequence belongs to the three-finger toxin family. Short-chain subfamily. Type I alpha-neurotoxin sub-subfamily. As to expression, expressed by the venom gland.

It is found in the secreted. Functionally, binds to muscle nicotinic acetylcholine receptor (nAChR) and inhibit acetylcholine from binding to the receptor, thereby impairing neuromuscular transmission. In Dendroaspis viridis (Western green mamba), this protein is Short neurotoxin 1.